The sequence spans 806 residues: Leucine--tRNA ligase (806 aa).

The short motif at 54-64 (SYPSGDLHMGH) is the 'HIGH' region element. The 'KMSKS' region motif lies at 571-575 (KMSKS). Residue K574 participates in ATP binding.

Belongs to the class-I aminoacyl-tRNA synthetase family.

The protein localises to the cytoplasm. It carries out the reaction tRNA(Leu) + L-leucine + ATP = L-leucyl-tRNA(Leu) + AMP + diphosphate. The polypeptide is Leucine--tRNA ligase (Tropheryma whipplei (strain TW08/27) (Whipple's bacillus)).